A 394-amino-acid chain; its full sequence is Glycogen synthase kinase 1 (394 aa).

The Protein kinase domain maps to 35–318 (YTQCKIVGNG…AIDAMVHPFF (284 aa)). Residues 41–49 (VGNGSFGVV) and K64 each bind ATP.

Belongs to the protein kinase superfamily. CMGC Ser/Thr protein kinase family. GSK-3 subfamily.

The protein localises to the cytoplasm. The catalysed reaction is L-seryl-[protein] + ATP = O-phospho-L-seryl-[protein] + ADP + H(+). Functionally, protein kinase that acts downstream of the MPS1 MAPK cascade as a highly conservative signal modulator that dictates growth, conidiation and pathogenicity. Phosphorylates HAT1 at 'Ser-8' to block its translocation from the nucleus to the cytoplasm where HAT1 positively regulates appressorium development and pathogenicity. The protein is Glycogen synthase kinase 1 of Pyricularia oryzae (Rice blast fungus).